The primary structure comprises 1023 residues: Vacuolar membrane protease (1023 aa).

The Cytoplasmic portion of the chain corresponds to 1 to 80 (MRAAGCGGTG…FFRSVFGYRK (80 aa)). Over residues 17 to 48 (KLSRSISQHQPKSMPQASVNSEQNPSVPNSPS) the composition is skewed to polar residues. The tract at residues 17 to 59 (KLSRSISQHQPKSMPQASVNSEQNPSVPNSPSAHKPARSQSAQ) is disordered. Residues 81-101 (TSLTFLVALVFAATLLLSWAD) form a helical membrane-spanning segment. The Vacuolar portion of the chain corresponds to 102 to 425 (SSLDFSVDMP…VVFSVSQVVS (324 aa)). N170 and N200 each carry an N-linked (GlcNAc...) asparagine glycan. Zn(2+) contacts are provided by H214 and D226. E259 functions as the Proton acceptor in the catalytic mechanism. Zn(2+)-binding residues include E260, E285, and H357. Residues 426 to 446 (ANIALLVVVPVASLLLLFIIF) form a helical membrane-spanning segment. Topologically, residues 447 to 461 (RCNKGWGFNFVNAIK) are cytoplasmic. A helical membrane pass occupies residues 462–482 (YPLSLVASVLVLTFVSQVIIV). Over 483–491 (PSNPFLVNS) the chain is Vacuolar. N490 carries N-linked (GlcNAc...) asparagine glycosylation. Residues 492–512 (SIGLLVATLFSLFLLLNYIVL) form a helical membrane-spanning segment. The Cytoplasmic segment spans residues 513–529 (NGLNLVFKSFKGHQHDE). A helical transmembrane segment spans residues 530–550 (KLIVMCESSFLTWILLLWSTV). Over 551–564 (KLSHNKFGDDHTGE) the chain is Vacuolar. Residues 565 to 585 (LFIPILFSLQAVACFLGFLGW) form a helical membrane-spanning segment. Topologically, residues 586–643 (CFKPSKKVKVSREEHQPLLSSNGSNYGTQDDDDSLAPSSSLSLQSGFSENCEVHETKS) are cytoplasmic. Polar residues predominate over residues 604-613 (LSSNGSNYGT). A disordered region spans residues 604 to 626 (LSSNGSNYGTQDDDDSLAPSSSL). A helical membrane pass occupies residues 644–664 (FSYDWLVQFLVIVPISSLIIF). Over 665 to 687 (NSGSLILNGLNKSIQESLSAQNL) the chain is Vacuolar. An N-linked (GlcNAc...) asparagine glycan is attached at N675. The chain crosses the membrane as a helical span at residues 688-708 (IYKFIQIFVIVWSIPFLPFIF). Residues 709 to 712 (KLNR) lie on the Cytoplasmic side of the membrane. Residues 713-733 (IIVLALSLVLLYGFFAVNITD) form a helical membrane-spanning segment. Topologically, residues 734–1023 (AFNDANPLKL…MVSVTKYIEV (290 aa)) are vacuolar. N-linked (GlcNAc...) asparagine glycosylation is found at N815, N858, and N892.

This sequence belongs to the peptidase M28 family. Zn(2+) is required as a cofactor.

Its subcellular location is the vacuole membrane. Functionally, may be involved in vacuolar sorting and osmoregulation. The polypeptide is Vacuolar membrane protease (Clavispora lusitaniae (strain ATCC 42720) (Yeast)).